The primary structure comprises 151 residues: Putative pre-16S rRNA nuclease (151 aa).

Belongs to the YqgF nuclease family.

The protein localises to the cytoplasm. In terms of biological role, could be a nuclease involved in processing of the 5'-end of pre-16S rRNA. The protein is Putative pre-16S rRNA nuclease of Aster yellows witches'-broom phytoplasma (strain AYWB).